The primary structure comprises 1390 residues: DNA-directed RNA polymerase subunit beta'' (1390 aa).

Zn(2+)-binding residues include Cys224, Cys294, Cys301, and Cys304.

This sequence belongs to the RNA polymerase beta' chain family. RpoC2 subfamily. As to quaternary structure, in plastids the minimal PEP RNA polymerase catalytic core is composed of four subunits: alpha, beta, beta', and beta''. When a (nuclear-encoded) sigma factor is associated with the core the holoenzyme is formed, which can initiate transcription. Zn(2+) serves as cofactor.

It is found in the plastid. It localises to the chloroplast. It carries out the reaction RNA(n) + a ribonucleoside 5'-triphosphate = RNA(n+1) + diphosphate. DNA-dependent RNA polymerase catalyzes the transcription of DNA into RNA using the four ribonucleoside triphosphates as substrates. This is DNA-directed RNA polymerase subunit beta'' from Ceratophyllum demersum (Rigid hornwort).